The primary structure comprises 194 residues: Large ribosomal subunit protein bL25 (194 aa).

It belongs to the bacterial ribosomal protein bL25 family. CTC subfamily. As to quaternary structure, part of the 50S ribosomal subunit; part of the 5S rRNA/L5/L18/L25 subcomplex. Contacts the 5S rRNA. Binds to the 5S rRNA independently of L5 and L18.

This is one of the proteins that binds to the 5S RNA in the ribosome where it forms part of the central protuberance. The sequence is that of Large ribosomal subunit protein bL25 from Parabacteroides distasonis (strain ATCC 8503 / DSM 20701 / CIP 104284 / JCM 5825 / NCTC 11152).